The sequence spans 329 residues: Homeobox protein ceh-40 (329 aa).

The region spanning Glu3–Asp186 is the PBC domain. The interval Asp10–Leu90 is PBC-A. The segment at Ile93 to Asp186 is PBC-B. The homeobox; TALE-type DNA-binding region spans Ala187–Met249. The tract at residues Thr248–Tyr275 is disordered. The span at Ala250–Pro266 shows a compositional bias: basic and acidic residues.

Belongs to the TALE/PBX homeobox family. In terms of tissue distribution, expressed in head dopaminergic neurons.

It localises to the nucleus. Functionally, plays a role in regulating gene expression in dopaminergic neurons, acting redundantly with homeobox protein ceh-20 in head neurons. May activate dopamine pathway genes in concert with ETS domain-containing protein ast-1, and homeobox proteins ceh-43 and ceh-20. The sequence is that of Homeobox protein ceh-40 (ceh-40) from Caenorhabditis elegans.